The chain runs to 129 residues: Small ribosomal subunit protein uS9 (129 aa).

It belongs to the universal ribosomal protein uS9 family.

In Chlorobium chlorochromatii (strain CaD3), this protein is Small ribosomal subunit protein uS9.